Consider the following 560-residue polypeptide: Protein SINE1 (560 aa).

The residue at position 2 (G2) is an N-acetylglycine. The tract at residues 7-287 is ARMADILLO-type fold; that stretch reads PILRQELANL…VRGAAYEAMM (281 aa). The KASH domain occupies 517-560; it reads KKKKKKMSYAKLVIAISFVVVALFATVILMVNQDDDVGYYTVPT. A helical membrane pass occupies residues 528-548; the sequence is LVIAISFVVVALFATVILMVN. The Required for nuclear localization motif lies at 557 to 560; the sequence is TVPT.

Interacts with SUN1 and SUN2. Binds to F-actin. Preferentially expressed in guards cells, but also detected in root cells.

Its subcellular location is the nucleus membrane. Functionally, plays a role in nucleus positioning in guard cells. In Arabidopsis thaliana (Mouse-ear cress), this protein is Protein SINE1.